We begin with the raw amino-acid sequence, 3601 residues long: Protein SPIRRIG (3601 aa).

7 disordered regions span residues 17-50 (AQSS…PSSS), 398-426 (SSNH…ADFS), 449-476 (PAEP…TSSV), 638-657 (QYSG…SFRK), 1954-1993 (HIND…SLGS), 2009-2049 (ENIL…DFQD), and 2715-2747 (TTHV…EKEL). The span at 32 to 50 (PPSSSSSSSSPSFTYPSSS) shows a compositional bias: low complexity. 2 stretches are compositionally biased toward polar residues: residues 416–426 (NTNSTENADFS) and 458–476 (SRSS…TSSV). A compositionally biased stretch (polar residues) spans 1974–1991 (STKTSISVGSFPQGQVSL). Residues 2027-2048 (EDVKKQDDHHVGPSASSERDFQ) are compositionally biased toward basic and acidic residues. Positions 2715 to 2731 (TTHVKSETGSPRHSSSA) are enriched in polar residues. The segment covering 2732 to 2747 (KMDETNGREEKSEKEL) has biased composition (basic and acidic residues). Positions 2760–2927 (EHLEKIRFRY…EREEVFKNLV (168 aa)) constitute a BEACH-type PH domain. The 293-residue stretch at 2952-3244 (GGRLFKLMAK…QLFPKAHVKR (293 aa)) folds into the BEACH domain. 4 WD repeats span residues 3328–3367 (HESN…PRGS), 3378–3417 (AHTA…FVRQ), 3464–3507 (PSDS…DPVS), and 3540–3579 (FHKQ…LRAS).

Interacts with DCP1. In terms of tissue distribution, expressed in flowers, leaves, stems, hypocotyls and roots.

Its subcellular location is the cytoplasm. It localises to the P-body. Involved in cell morphogenesis. May have a function in membrane fusion or membrane composition. Required for salt stress tolerance. Regulates the salt stress-dependent post-transcriptional stabilization, cytoplasmic agglomeration, and localization to P-bodies of a subset of salt stress-regulated mRNAs. The protein is Protein SPIRRIG of Arabidopsis thaliana (Mouse-ear cress).